The primary structure comprises 161 residues: Large ribosomal subunit protein eL21 (161 aa).

This sequence belongs to the eukaryotic ribosomal protein eL21 family.

The polypeptide is Large ribosomal subunit protein eL21 (rpl-21) (Caenorhabditis elegans).